Reading from the N-terminus, the 293-residue chain is Elongation factor Ts (293 aa).

Residues 81–84 (TDFV) are involved in Mg(2+) ion dislocation from EF-Tu.

Belongs to the EF-Ts family.

The protein resides in the cytoplasm. In terms of biological role, associates with the EF-Tu.GDP complex and induces the exchange of GDP to GTP. It remains bound to the aminoacyl-tRNA.EF-Tu.GTP complex up to the GTP hydrolysis stage on the ribosome. The protein is Elongation factor Ts of Methylococcus capsulatus (strain ATCC 33009 / NCIMB 11132 / Bath).